Reading from the N-terminus, the 85-residue chain is Cell division topological specificity factor (85 aa).

The protein belongs to the MinE family.

Its function is as follows. Prevents the cell division inhibition by proteins MinC and MinD at internal division sites while permitting inhibition at polar sites. This ensures cell division at the proper site by restricting the formation of a division septum at the midpoint of the long axis of the cell. The polypeptide is Cell division topological specificity factor (Dechloromonas aromatica (strain RCB)).